The chain runs to 357 residues: Peptide chain release factor 1 (357 aa).

An N5-methylglutamine modification is found at Q236.

It belongs to the prokaryotic/mitochondrial release factor family. In terms of processing, methylated by PrmC. Methylation increases the termination efficiency of RF1.

Its subcellular location is the cytoplasm. Functionally, peptide chain release factor 1 directs the termination of translation in response to the peptide chain termination codons UAG and UAA. This is Peptide chain release factor 1 from Mycobacterium marinum (strain ATCC BAA-535 / M).